Reading from the N-terminus, the 427-residue chain is MSTVVLVGAQWGDEGKGKVTDFLAEKADLVVRYQGGNNAGHTVVVGDREFKLHLIPSGILYPDKICVIGNGVVIDPAVLIGEMEALAKQGISTANLKISQRAHVIFPYHQRLDQVEENRKGSGKIGTTCRGIGPAYTDKSARIGIRMADLVDEEVFAALLEQNMKDKNHLFTRVYGLPPLDYGSVLESYRGYAKALKGYVTDISIIINEAIKQGKNILFEGAQGTLLDIDHGTYPYVTSSHPVAAAACIGVGIGPTRINRVIGVAKAYITRVGEGPFPTEMKDELGDYIRKKGGEFGTTTGRPRRCGWFDGVAGRYAVRVNGLDYLAVTKLDVLSGLEKVKICTGYLYHGDILNEFPASLKVLRECVPVYDELPGWQEDISGARKLSDLPANARRYLERIGEVTGAPIALIGVGSRRSQTILTAELY.

Residues 12–18 and 40–42 each bind GTP; these read GDEGKGK and GHT. The Proton acceptor role is filled by aspartate 13. Residues aspartate 13 and glycine 40 each coordinate Mg(2+). Residues 13 to 16, 38 to 41, threonine 128, arginine 142, glutamine 223, threonine 238, and arginine 302 each bind IMP; these read DEGK and NAGH. The active-site Proton donor is histidine 41. 298–304 is a binding site for substrate; the sequence is TTTGRPR. GTP is bound by residues arginine 304, 330–332, and 412–414; these read KLD and GVG.

The protein belongs to the adenylosuccinate synthetase family. Homodimer. Requires Mg(2+) as cofactor.

It localises to the cytoplasm. The enzyme catalyses IMP + L-aspartate + GTP = N(6)-(1,2-dicarboxyethyl)-AMP + GDP + phosphate + 2 H(+). Its pathway is purine metabolism; AMP biosynthesis via de novo pathway; AMP from IMP: step 1/2. Its function is as follows. Plays an important role in the de novo pathway of purine nucleotide biosynthesis. Catalyzes the first committed step in the biosynthesis of AMP from IMP. This is Adenylosuccinate synthetase from Pelotomaculum thermopropionicum (strain DSM 13744 / JCM 10971 / SI).